The sequence spans 144 residues: Deoxyuridine 5'-triphosphate nucleotidohydrolase (144 aa).

Residues 63 to 65 (RSG), asparagine 76, and 80 to 82 (TVD) each bind substrate.

The protein belongs to the dUTPase family. It depends on Mg(2+) as a cofactor.

The catalysed reaction is dUTP + H2O = dUMP + diphosphate + H(+). Its pathway is pyrimidine metabolism; dUMP biosynthesis; dUMP from dCTP (dUTP route): step 2/2. In terms of biological role, this enzyme is involved in nucleotide metabolism: it produces dUMP, the immediate precursor of thymidine nucleotides and it decreases the intracellular concentration of dUTP so that uracil cannot be incorporated into DNA. In Flavobacterium johnsoniae (strain ATCC 17061 / DSM 2064 / JCM 8514 / BCRC 14874 / CCUG 350202 / NBRC 14942 / NCIMB 11054 / UW101) (Cytophaga johnsonae), this protein is Deoxyuridine 5'-triphosphate nucleotidohydrolase.